A 345-amino-acid chain; its full sequence is Tetraacyldisaccharide 4'-kinase (345 aa).

Residue threonine 54–threonine 61 participates in ATP binding.

It belongs to the LpxK family.

The catalysed reaction is a lipid A disaccharide + ATP = a lipid IVA + ADP + H(+). Its pathway is glycolipid biosynthesis; lipid IV(A) biosynthesis; lipid IV(A) from (3R)-3-hydroxytetradecanoyl-[acyl-carrier-protein] and UDP-N-acetyl-alpha-D-glucosamine: step 6/6. In terms of biological role, transfers the gamma-phosphate of ATP to the 4'-position of a tetraacyldisaccharide 1-phosphate intermediate (termed DS-1-P) to form tetraacyldisaccharide 1,4'-bis-phosphate (lipid IVA). The chain is Tetraacyldisaccharide 4'-kinase from Allorhizobium ampelinum (strain ATCC BAA-846 / DSM 112012 / S4) (Agrobacterium vitis (strain S4)).